We begin with the raw amino-acid sequence, 179 residues long: Putative undecaprenyl-phosphate N-acetylgalactosaminyl 1-phosphate transferase (179 aa).

Residues 39 to 59 (IWFALIGLAIALPMIAVFSIL) form a helical membrane-spanning segment.

This sequence belongs to the bacterial sugar transferase family.

It is found in the cell membrane. It carries out the reaction di-trans,octa-cis-undecaprenyl phosphate + UDP-N-acetyl-alpha-D-galactosamine = N-acetyl-alpha-D-galactosaminyl-di-trans,octa-cis-undecaprenyl diphosphate + UMP. Its pathway is cell wall biogenesis; teichuronic acid biosynthesis. Functionally, might mediate the very first reaction in teichuronic synthesis, i.e. the formation of lipid-linked N-acetylglucosamine. This chain is Putative undecaprenyl-phosphate N-acetylgalactosaminyl 1-phosphate transferase (tuaA), found in Bacillus subtilis (strain 168).